A 616-amino-acid polypeptide reads, in one-letter code: Chaperone protein HscA homolog (616 aa).

It belongs to the heat shock protein 70 family.

Functionally, chaperone involved in the maturation of iron-sulfur cluster-containing proteins. Has a low intrinsic ATPase activity which is markedly stimulated by HscB. The polypeptide is Chaperone protein HscA homolog (Vibrio cholerae serotype O1 (strain M66-2)).